The following is a 327-amino-acid chain: MSSQFDQLKLWSVLVGDTGDPALIKTLGVQDATTNPSLILKVAQEPKYQSMLTEAISWGIRQNGDDVQTLTFVLDKIQVNLGLEILKHVPGRVSLEIDARLSFNTEAMVQRAIFLSQLFEKMGGDKKRLLVKIPGTWEGICAAEVLESQGIACNVTLIFNLVQAIAAAKAKVTLVSPFVGRIYDWWIAAYGAEGYSIEADPGVASVANIYSYYKKFDIPTQIMAASFRTKEQVLALAGCDFLTISPKLLEELKKDQQPVERKLSVEEAKKLDIQPVELSESVFRFLMNEDAMATEKLAEGIRIFSGDTQILESAVTEFIRQIAAQEA.

The active-site Schiff-base intermediate with substrate is the lysine 132.

This sequence belongs to the transaldolase family. Type 1 subfamily.

It localises to the cytoplasm. It catalyses the reaction D-sedoheptulose 7-phosphate + D-glyceraldehyde 3-phosphate = D-erythrose 4-phosphate + beta-D-fructose 6-phosphate. It functions in the pathway carbohydrate degradation; pentose phosphate pathway; D-glyceraldehyde 3-phosphate and beta-D-fructose 6-phosphate from D-ribose 5-phosphate and D-xylulose 5-phosphate (non-oxidative stage): step 2/3. In terms of biological role, transaldolase is important for the balance of metabolites in the pentose-phosphate pathway. This chain is Transaldolase, found in Chlamydia trachomatis serovar D (strain ATCC VR-885 / DSM 19411 / UW-3/Cx).